The sequence spans 224 residues: tRNA (guanine-N(7)-)-methyltransferase (224 aa).

S-adenosyl-L-methionine is bound by residues Glu54, Glu79, Asp106, and Asp129. The active site involves Asp129. Substrate contacts are provided by Lys133 and Asp165.

Belongs to the class I-like SAM-binding methyltransferase superfamily. TrmB family.

It catalyses the reaction guanosine(46) in tRNA + S-adenosyl-L-methionine = N(7)-methylguanosine(46) in tRNA + S-adenosyl-L-homocysteine. The protein operates within tRNA modification; N(7)-methylguanine-tRNA biosynthesis. Catalyzes the formation of N(7)-methylguanine at position 46 (m7G46) in tRNA. This Chlamydia felis (strain Fe/C-56) (Chlamydophila felis) protein is tRNA (guanine-N(7)-)-methyltransferase.